Here is a 290-residue protein sequence, read N- to C-terminus: D-tagatose-1,6-bisphosphate aldolase subunit KbaY (290 aa).

The active-site Proton donor is D82. H83 and H180 together coordinate Zn(2+). G181 is a dihydroxyacetone phosphate binding site. H208 is a Zn(2+) binding site. Residues 209 to 211 (GAS) and 230 to 233 (NVAT) each bind dihydroxyacetone phosphate.

It belongs to the class II fructose-bisphosphate aldolase family. TagBP aldolase KbaY subfamily. In terms of assembly, homotetramer. Forms a complex with KbaZ. Requires Zn(2+) as cofactor.

It carries out the reaction D-tagatofuranose 1,6-bisphosphate = D-glyceraldehyde 3-phosphate + dihydroxyacetone phosphate. It participates in carbohydrate metabolism; D-tagatose 6-phosphate degradation; D-glyceraldehyde 3-phosphate and glycerone phosphate from D-tagatose 6-phosphate: step 2/2. Its function is as follows. Catalytic subunit of the tagatose-1,6-bisphosphate aldolase KbaYZ, which catalyzes the reversible aldol condensation of dihydroxyacetone phosphate (DHAP or glycerone-phosphate) with glyceraldehyde 3-phosphate (G3P) to produce tagatose 1,6-bisphosphate (TBP). Requires KbaZ subunit for full activity and stability. This is D-tagatose-1,6-bisphosphate aldolase subunit KbaY from Citrobacter koseri (strain ATCC BAA-895 / CDC 4225-83 / SGSC4696).